The primary structure comprises 237 residues: Pyridoxal 5'-phosphate synthase subunit PdxS (237 aa).

The active-site Schiff-base intermediate with D-ribose 5-phosphate is the Lys19. Gly91 serves as a coordination point for D-ribose 5-phosphate. D-glyceraldehyde 3-phosphate is bound at residue Arg103. Residues Gly157 and 178–179 (GS) each bind D-ribose 5-phosphate.

The protein belongs to the PdxS/SNZ family. In the presence of PdxT, forms a dodecamer of heterodimers.

It carries out the reaction aldehydo-D-ribose 5-phosphate + D-glyceraldehyde 3-phosphate + L-glutamine = pyridoxal 5'-phosphate + L-glutamate + phosphate + 3 H2O + H(+). It participates in cofactor biosynthesis; pyridoxal 5'-phosphate biosynthesis. Its function is as follows. Catalyzes the formation of pyridoxal 5'-phosphate from ribose 5-phosphate (RBP), glyceraldehyde 3-phosphate (G3P) and ammonia. The ammonia is provided by the PdxT subunit. Can also use ribulose 5-phosphate and dihydroxyacetone phosphate as substrates, resulting from enzyme-catalyzed isomerization of RBP and G3P, respectively. This chain is Pyridoxal 5'-phosphate synthase subunit PdxS, found in Methanococcus vannielii.